A 267-amino-acid polypeptide reads, in one-letter code: MQEFTNPFPIGSSSLIHCITNEISCEMLANGILALGCKPVMADDSREVLDFTKQSQALFINLGHLSAEKEKAIRMAASYANQSSLPMVVDAVGVTTSSIRKSLVKDLLDYRPTVLKGNMSEIRSLVGLKHHGVGVDASAKDQETEDLLQVLKDWCQTYPGMSFLVTGPKDLVVSKNQVAVLGNGCTELDWITGTGDLVGALTAVFLSQGKTGFEASCLAVSYLNIAAEKIVVQGMGLEEFRYQVLNQLSLLRRDENWLDTIKGEVYE.

Position 41 (Met-41) interacts with substrate. Residues Lys-116 and Thr-166 each contribute to the ATP site. Residue Gly-193 participates in substrate binding.

This sequence belongs to the Thz kinase family. Mg(2+) is required as a cofactor.

It catalyses the reaction 5-(2-hydroxyethyl)-4-methylthiazole + ATP = 4-methyl-5-(2-phosphooxyethyl)-thiazole + ADP + H(+). It functions in the pathway cofactor biosynthesis; thiamine diphosphate biosynthesis; 4-methyl-5-(2-phosphoethyl)-thiazole from 5-(2-hydroxyethyl)-4-methylthiazole: step 1/1. Its function is as follows. Catalyzes the phosphorylation of the hydroxyl group of 4-methyl-5-beta-hydroxyethylthiazole (THZ). In Streptococcus pneumoniae serotype 4 (strain ATCC BAA-334 / TIGR4), this protein is Hydroxyethylthiazole kinase 2.